The following is a 35-amino-acid chain: Conotoxin Ca15a (35 aa).

The residue at position 8 (proline 8) is a 4-hydroxyproline.

Contains 4 disulfide bonds. Expressed by the venom duct.

It is found in the secreted. This chain is Conotoxin Ca15a, found in Conus caracteristicus (Characteristic cone).